Here is a 179-residue protein sequence, read N- to C-terminus: Inner membrane-spanning protein YciB (179 aa).

6 helical membrane-spanning segments follow: residues 3–23, 24–44, 49–69, 76–96, 121–141, and 149–169; these read FLFD…ADIY, TATA…WFRH, PMQW…LVLH, WKPT…VLVW, LAWA…AYQF, and FKLF…SVWL.

It belongs to the YciB family.

Its subcellular location is the cell inner membrane. Plays a role in cell envelope biogenesis, maintenance of cell envelope integrity and membrane homeostasis. This is Inner membrane-spanning protein YciB from Cupriavidus taiwanensis (strain DSM 17343 / BCRC 17206 / CCUG 44338 / CIP 107171 / LMG 19424 / R1) (Ralstonia taiwanensis (strain LMG 19424)).